The sequence spans 216 residues: Probable GTP-binding protein EngB (216 aa).

Residues 27-201 (EGIEVAFAGR…REKLDTWFSE (175 aa)) form the EngB-type G domain. GTP-binding positions include 35–42 (GRSNAGKS), 62–66 (GRTQL), 80–83 (DLPG), 147–150 (TKAD), and 180–182 (FSS). Mg(2+) is bound by residues serine 42 and threonine 64.

It belongs to the TRAFAC class TrmE-Era-EngA-EngB-Septin-like GTPase superfamily. EngB GTPase family. Requires Mg(2+) as cofactor.

In terms of biological role, necessary for normal cell division and for the maintenance of normal septation. This chain is Probable GTP-binding protein EngB, found in Yersinia pseudotuberculosis serotype O:1b (strain IP 31758).